We begin with the raw amino-acid sequence, 324 residues long: tRNA-modifying protein YgfZ (324 aa).

Trp184 provides a ligand contact to folate.

Belongs to the tRNA-modifying YgfZ family.

It localises to the cytoplasm. Functionally, folate-binding protein involved in regulating the level of ATP-DnaA and in the modification of some tRNAs. It is probably a key factor in regulatory networks that act via tRNA modification, such as initiation of chromosomal replication. This chain is tRNA-modifying protein YgfZ, found in Vibrio vulnificus (strain YJ016).